Here is a 218-residue protein sequence, read N- to C-terminus: 25 kDa calcium-binding protein (218 aa).

EF-hand domains lie at 24-59, 66-101, 128-163, and 171-206; these read GAKT…AYKS, PSSD…YLTG, AKLD…TYAE, and PTKE…SLQK. Positions 37, 43, 48, 79, 81, 83, 90, 141, 143, 145, 147, 152, 184, 186, 188, 190, and 195 each coordinate Ca(2+).

Expected to play a crucial role in calcium-dependent regulation of ciliary movement. The protein is 25 kDa calcium-binding protein of Tetrahymena thermophila.